The following is a 174-amino-acid chain: uncharacterized protein (174 aa).

Residues 138 to 174 (VNLTSKSSGRSDEEGTTRRAPVLKTRADFVSRKDKHR) are disordered. A compositionally biased stretch (basic and acidic residues) spans 162 to 174 (TRADFVSRKDKHR).

This is an uncharacterized protein from Bos taurus (Bovine).